Consider the following 43-residue polypeptide: Potassium channel toxin gamma-KTx 4.4 (43 aa).

4 disulfide bridges follow: Cys5–Cys23, Cys11–Cys34, Cys20–Cys39, and Cys24–Cys41.

The protein belongs to the ergtoxin family. Gamma-KTx 4 subfamily. As to expression, expressed by the venom gland.

It is found in the secreted. Reversibly blocks Kv11/ERG potassium channels. This Centruroides exilicauda (Bark scorpion) protein is Potassium channel toxin gamma-KTx 4.4.